Consider the following 453-residue polypeptide: Homogentisate 1,2-dioxygenase (453 aa).

Histidine 306 (proton acceptor) is an active-site residue. 2 residues coordinate Fe cation: histidine 349 and glutamate 355. Homogentisate-binding residues include tyrosine 364 and histidine 385. Histidine 385 contacts Fe cation.

This sequence belongs to the homogentisate dioxygenase family. Hexamer; dimer of trimers. The cofactor is Fe cation.

The enzyme catalyses homogentisate + O2 = 4-maleylacetoacetate + H(+). Its pathway is amino-acid degradation; L-phenylalanine degradation; acetoacetate and fumarate from L-phenylalanine: step 4/6. In terms of biological role, involved in the catabolism of homogentisate (2,5-dihydroxyphenylacetate or 2,5-OH-PhAc), a central intermediate in the degradation of phenylalanine and tyrosine. Catalyzes the oxidative ring cleavage of the aromatic ring of homogentisate to yield maleylacetoacetate. This is Homogentisate 1,2-dioxygenase from Rhizobium etli (strain CIAT 652).